Reading from the N-terminus, the 289-residue chain is Delta-sarcoglycan (289 aa).

At 1–37 (MPQEQYSHHRSTMPSSEGPHIYKVGIYGWRKRCLYFF) the chain is on the cytoplasmic side. The chain crosses the membrane as a helical; Signal-anchor for type II membrane protein span at residues 38–56 (VLLLMILILVNLAMTIWIL). The Extracellular portion of the chain corresponds to 57-289 (KVMNFTIDGM…TCQINTSVCL (233 aa)). N-linked (GlcNAc...) asparagine glycosylation is found at Asn-60 and Asn-108. Disulfide bonds link Cys-263–Cys-288 and Cys-265–Cys-281. An N-linked (GlcNAc...) asparagine glycan is attached at Asn-284.

The protein belongs to the sarcoglycan beta/delta/gamma/zeta family. Interacts with FLNC. Cross-link to form 2 major subcomplexes: one consisting of SGCB, SGCD and SGCG and the other consisting of SGCB and SGCD. The association between SGCB and SGCG is particularly strong while SGCA is loosely associated with the other sarcoglycans. Interacts with DAG1. In terms of processing, disulfide bonds are present. Most strongly expressed in skeletal and heart muscle. Also detected in proliferating myoblasts.

The protein resides in the cell membrane. Its subcellular location is the sarcolemma. The protein localises to the cytoplasm. It localises to the cytoskeleton. Functionally, component of the sarcoglycan complex, a subcomplex of the dystrophin-glycoprotein complex which forms a link between the F-actin cytoskeleton and the extracellular matrix. The polypeptide is Delta-sarcoglycan (Sgcd) (Mus musculus (Mouse)).